Consider the following 164-residue polypeptide: Ribosome maturation factor RimM (164 aa).

Positions 90 to 161 (KGSYFIADLI…TVTIKPLEIW (72 aa)) constitute a PRC barrel domain.

The protein belongs to the RimM family. In terms of assembly, binds ribosomal protein uS19.

It is found in the cytoplasm. Its function is as follows. An accessory protein needed during the final step in the assembly of 30S ribosomal subunit, possibly for assembly of the head region. Essential for efficient processing of 16S rRNA. May be needed both before and after RbfA during the maturation of 16S rRNA. It has affinity for free ribosomal 30S subunits but not for 70S ribosomes. The sequence is that of Ribosome maturation factor RimM from Clostridium botulinum (strain Hall / ATCC 3502 / NCTC 13319 / Type A).